Here is a 221-residue protein sequence, read N- to C-terminus: Probable septum site-determining protein MinC (221 aa).

The protein belongs to the MinC family. In terms of assembly, interacts with MinD and FtsZ.

Its function is as follows. Cell division inhibitor that blocks the formation of polar Z ring septums. Rapidly oscillates between the poles of the cell to destabilize FtsZ filaments that have formed before they mature into polar Z rings. Prevents FtsZ polymerization. The polypeptide is Probable septum site-determining protein MinC (Shewanella loihica (strain ATCC BAA-1088 / PV-4)).